Consider the following 477-residue polypeptide: Bifunctional protein HldE (477 aa).

Residues 1–318 are ribokinase; the sequence is MKVTLPEFER…ENAVRGRADT (318 aa). 195–198 lines the ATP pocket; it reads NLSE. Residue Asp264 is part of the active site. Residues 344 to 477 are cytidylyltransferase; that stretch reads MTNGVFDILH…IKKIQKDSDK (134 aa).

In the N-terminal section; belongs to the carbohydrate kinase PfkB family. This sequence in the C-terminal section; belongs to the cytidylyltransferase family. In terms of assembly, homodimer.

It catalyses the reaction D-glycero-beta-D-manno-heptose 7-phosphate + ATP = D-glycero-beta-D-manno-heptose 1,7-bisphosphate + ADP + H(+). The enzyme catalyses D-glycero-beta-D-manno-heptose 1-phosphate + ATP + H(+) = ADP-D-glycero-beta-D-manno-heptose + diphosphate. The protein operates within nucleotide-sugar biosynthesis; ADP-L-glycero-beta-D-manno-heptose biosynthesis; ADP-L-glycero-beta-D-manno-heptose from D-glycero-beta-D-manno-heptose 7-phosphate: step 1/4. Its pathway is nucleotide-sugar biosynthesis; ADP-L-glycero-beta-D-manno-heptose biosynthesis; ADP-L-glycero-beta-D-manno-heptose from D-glycero-beta-D-manno-heptose 7-phosphate: step 3/4. In terms of biological role, catalyzes the phosphorylation of D-glycero-D-manno-heptose 7-phosphate at the C-1 position to selectively form D-glycero-beta-D-manno-heptose-1,7-bisphosphate. Its function is as follows. Catalyzes the ADP transfer from ATP to D-glycero-beta-D-manno-heptose 1-phosphate, yielding ADP-D-glycero-beta-D-manno-heptose. This is Bifunctional protein HldE from Citrobacter koseri (strain ATCC BAA-895 / CDC 4225-83 / SGSC4696).